Here is a 791-residue protein sequence, read N- to C-terminus: Leucine-rich repeat-containing protein SOG2 (791 aa).

Residues Met1 to Asn28 are disordered. The segment covering Arg8–Ala19 has biased composition (basic and acidic residues). LRR repeat units lie at residues Ser43–Tyr64, Asn67–Leu88, Arg90–Cys111, Gln113–Phe134, Asn138–Thr159, and Lys163–Gln183. Position 214 is a phosphothreonine (Thr214). 2 disordered regions span residues Ala454–Ala506 and His534–Gln569. Residues Ser469–Thr486 show a composition bias toward low complexity. Positions Asn544–Gln569 are enriched in polar residues.

Its subcellular location is the cytoplasm. In terms of biological role, required for proper cell morphogenesis and cell separation after mitosis. Functions in the RAM (regulation of ACE2 activity and cellular morphogenesis) signaling network and is required for proper ACE2 localization and CBK1 kinase activity. This chain is Leucine-rich repeat-containing protein SOG2, found in Saccharomyces cerevisiae (strain ATCC 204508 / S288c) (Baker's yeast).